The sequence spans 190 residues: Orotate phosphoribosyltransferase (190 aa).

114 to 122 (EDVITTGGS) contacts 5-phospho-alpha-D-ribose 1-diphosphate. Residues T118 and R146 each coordinate orotate.

It belongs to the purine/pyrimidine phosphoribosyltransferase family. PyrE subfamily. As to quaternary structure, homodimer. Mg(2+) is required as a cofactor.

It catalyses the reaction orotidine 5'-phosphate + diphosphate = orotate + 5-phospho-alpha-D-ribose 1-diphosphate. It participates in pyrimidine metabolism; UMP biosynthesis via de novo pathway; UMP from orotate: step 1/2. In terms of biological role, catalyzes the transfer of a ribosyl phosphate group from 5-phosphoribose 1-diphosphate to orotate, leading to the formation of orotidine monophosphate (OMP). The sequence is that of Orotate phosphoribosyltransferase from Caldicellulosiruptor bescii (strain ATCC BAA-1888 / DSM 6725 / KCTC 15123 / Z-1320) (Anaerocellum thermophilum).